Reading from the N-terminus, the 302-residue chain is Sulfate adenylyltransferase subunit 2 (302 aa).

It belongs to the PAPS reductase family. CysD subfamily. As to quaternary structure, heterodimer composed of CysD, the smaller subunit, and CysN.

It catalyses the reaction sulfate + ATP + H(+) = adenosine 5'-phosphosulfate + diphosphate. Its pathway is sulfur metabolism; hydrogen sulfide biosynthesis; sulfite from sulfate: step 1/3. Its function is as follows. With CysN forms the ATP sulfurylase (ATPS) that catalyzes the adenylation of sulfate producing adenosine 5'-phosphosulfate (APS) and diphosphate, the first enzymatic step in sulfur assimilation pathway. APS synthesis involves the formation of a high-energy phosphoric-sulfuric acid anhydride bond driven by GTP hydrolysis by CysN coupled to ATP hydrolysis by CysD. This chain is Sulfate adenylyltransferase subunit 2, found in Enterobacter sp. (strain 638).